The sequence spans 270 residues: MTVQTAERTITLVQAIWPKLRKEAEKQCEVNPWLAKDLARKILSKKTLRESLSCVLALPLDHVTGSSESMENWFYSILGLNDEKIIRSAMIDLDRLYTTNPACPDLISAFLSFRGFHALQLYRIAHGLWSEGDKTSAVLVQNWTAVAYGVDIHPAASIGDGLFLDHALGIVIGETAIVEDGVSIWHNVTLGSTFKDSGARHPVIRKNAMLCTGATVLGRVEVGENAVVAAGALVTKDVAPNRLALGSPARDVGPVPQYFGALTNPNCTNK.

The protein belongs to the transferase hexapeptide repeat family.

It is found in the cytoplasm. The protein resides in the nucleus. It catalyses the reaction L-serine + acetyl-CoA = O-acetyl-L-serine + CoA. It functions in the pathway amino-acid biosynthesis; L-cysteine biosynthesis; L-cysteine from L-serine: step 1/2. The chain is Putative serine acetyltransferase from Schizosaccharomyces pombe (strain 972 / ATCC 24843) (Fission yeast).